The primary structure comprises 211 residues: Agamous-like MADS-box protein AGL12 (211 aa).

The 55-residue stretch at 3-57 folds into the MADS-box domain; that stretch reads RGKIQLKRIENPVHRQVTFCKRRTGLLKKAKELSVLCDAEIGVVIFSPQGKLFEL. Residues 95–185 form the K-box domain; that stretch reads NLDPKDEINV…LEKIEENNNS (91 aa).

In terms of tissue distribution, preferentially expressed in roots. In root meristem, expressed in external cells of columella, lateral root cap and atrichoblasts. In mature root, expressed in the central cylinder. Expressed in leaf vasculature, young floral meristems and nectaries.

Its subcellular location is the nucleus. Probable transcription activator that regulates root development by controlling cell proliferation in root meristem. May mediate responses to auxin in the root. May act as promoter of the flowering transition through up-regulation of SOC, FT and LFY. The polypeptide is Agamous-like MADS-box protein AGL12 (Arabidopsis thaliana (Mouse-ear cress)).